We begin with the raw amino-acid sequence, 208 residues long: V-type ATP synthase subunit D (208 aa).

Belongs to the V-ATPase D subunit family.

Produces ATP from ADP in the presence of a proton gradient across the membrane. This chain is V-type ATP synthase subunit D, found in Streptococcus pyogenes serotype M3 (strain ATCC BAA-595 / MGAS315).